Consider the following 150-residue polypeptide: MQLTSQAFSYGRPIPKKYSCQGVGISPPLSFSDVPREAKSLVLIVEDPDVPPSVREDGLWIHWIVYNLSPVVSNLAEGAQIFAVQGLNTAGEIGYCPPCPPDAKHRYYFYAYALDVVLSDEEGVTKEQLLEAMDGHIIATAELMGTYEKD.

It belongs to the UPF0098 family.

The protein is UPF0098 protein CT_736 of Chlamydia trachomatis serovar D (strain ATCC VR-885 / DSM 19411 / UW-3/Cx).